We begin with the raw amino-acid sequence, 83 residues long: MAKEELIEMQGSVTEVLPDSRFRVTLDNGHQLIAYTGGKMRKHHIRILAGDKVSLEMSPYDLSKGRITFRHLAGRGPGPSSSR.

The S1-like domain occupies 1–72 (MAKEELIEMQ…SKGRITFRHL (72 aa)).

This sequence belongs to the IF-1 family. As to quaternary structure, component of the 30S ribosomal translation pre-initiation complex which assembles on the 30S ribosome in the order IF-2 and IF-3, IF-1 and N-formylmethionyl-tRNA(fMet); mRNA recruitment can occur at any time during PIC assembly.

It localises to the cytoplasm. In terms of biological role, one of the essential components for the initiation of protein synthesis. Stabilizes the binding of IF-2 and IF-3 on the 30S subunit to which N-formylmethionyl-tRNA(fMet) subsequently binds. Helps modulate mRNA selection, yielding the 30S pre-initiation complex (PIC). Upon addition of the 50S ribosomal subunit IF-1, IF-2 and IF-3 are released leaving the mature 70S translation initiation complex. In Verminephrobacter eiseniae (strain EF01-2), this protein is Translation initiation factor IF-1.